The primary structure comprises 160 residues: 6,7-dimethyl-8-ribityllumazine synthase (160 aa).

5-amino-6-(D-ribitylamino)uracil contacts are provided by residues Trp26, 58-60, and 80-82; these read AIE and VVI. 85 to 86 contributes to the (2S)-2-hydroxy-3-oxobutyl phosphate binding site; it reads ET. Residue His88 is the Proton donor of the active site. Asn113 serves as a coordination point for 5-amino-6-(D-ribitylamino)uracil. Arg127 serves as a coordination point for (2S)-2-hydroxy-3-oxobutyl phosphate.

Belongs to the DMRL synthase family. As to quaternary structure, homopentamer.

The catalysed reaction is (2S)-2-hydroxy-3-oxobutyl phosphate + 5-amino-6-(D-ribitylamino)uracil = 6,7-dimethyl-8-(1-D-ribityl)lumazine + phosphate + 2 H2O + H(+). The protein operates within cofactor biosynthesis; riboflavin biosynthesis; riboflavin from 2-hydroxy-3-oxobutyl phosphate and 5-amino-6-(D-ribitylamino)uracil: step 1/2. In terms of biological role, catalyzes the formation of 6,7-dimethyl-8-ribityllumazine by condensation of 5-amino-6-(D-ribitylamino)uracil with 3,4-dihydroxy-2-butanone 4-phosphate. This is the penultimate step in the biosynthesis of riboflavin. This Mycobacteroides abscessus (strain ATCC 19977 / DSM 44196 / CCUG 20993 / CIP 104536 / JCM 13569 / NCTC 13031 / TMC 1543 / L948) (Mycobacterium abscessus) protein is 6,7-dimethyl-8-ribityllumazine synthase.